A 152-amino-acid chain; its full sequence is ALK and LTK ligand 1 (152 aa).

Positions 1 to 23 (MRAEKRWHILLSMILLLITSSQC) are cleaved as a signal peptide. Cystine bridges form between cysteine 113–cysteine 149 and cysteine 127–cysteine 136.

The protein belongs to the ALKAL family. In terms of tissue distribution, expressed at low level in the notochord and iridophore stripes, the eye and the swim bladder.

The protein resides in the secreted. Its subcellular location is the cell membrane. Cytokine that acts as a physiological ligand for receptor tyrosine kinases LTK and ALK. Required for iridophore development in the adult eye by acting as a receptor for LTK. In Danio rerio (Zebrafish), this protein is ALK and LTK ligand 1.